The chain runs to 484 residues: MQFKQDFFTQLPEFYSQVYPQGLSHPQWLAWSHDAAQLIGLTQPTDELLLGLSGNAAIDGATYYAQVYSGHQFGGYTPRLGDGRSIILGEAIGPNGAWDVALKGGGPTPYSRHGDGRAVMRSAVREFLVSEALYHLHVPTTRALAVIGSDMPVWRESQETAAITVRLARSHIRFGHFEFFCHSERGRADKLLQLLNFTITQHYPHLSCDPSGYKAWFLQVVQDTAKMIAHWQAVGFAHGVMNTDNMSILGDSFDFGPFAFLDTFQEDFICNHSDPEGRYAFGQQPGVGLWNLQRLAQALTPVIPSDDLIAILNQYQEALVQTYLLLMRAKLGLTTLDKSTAEQDKQDLELIGQFTVLMEKNQLDYAQTWRQFGQLDPRSQHSSLRDDFIDTHQFDTWYKAYQLRLGDVTDIAAWQTERNSVNPKYILRNYLAQEAIIAVEEGNLAPLQRLQQVLSQPFAEQVEHDELAKRPPDWGQGLIMSCSS.

8 residues coordinate ATP: Gly81, Gly83, Arg84, Lys103, Asp115, Gly116, Arg166, and Arg173. Asp244 (proton acceptor) is an active-site residue. Mg(2+)-binding residues include Asn245 and Asp254. Asp254 serves as a coordination point for ATP.

The protein belongs to the SELO family. The cofactor is Mg(2+). Mn(2+) serves as cofactor.

The catalysed reaction is L-seryl-[protein] + ATP = 3-O-(5'-adenylyl)-L-seryl-[protein] + diphosphate. The enzyme catalyses L-threonyl-[protein] + ATP = 3-O-(5'-adenylyl)-L-threonyl-[protein] + diphosphate. It carries out the reaction L-tyrosyl-[protein] + ATP = O-(5'-adenylyl)-L-tyrosyl-[protein] + diphosphate. It catalyses the reaction L-histidyl-[protein] + UTP = N(tele)-(5'-uridylyl)-L-histidyl-[protein] + diphosphate. The catalysed reaction is L-seryl-[protein] + UTP = O-(5'-uridylyl)-L-seryl-[protein] + diphosphate. The enzyme catalyses L-tyrosyl-[protein] + UTP = O-(5'-uridylyl)-L-tyrosyl-[protein] + diphosphate. In terms of biological role, nucleotidyltransferase involved in the post-translational modification of proteins. It can catalyze the addition of adenosine monophosphate (AMP) or uridine monophosphate (UMP) to a protein, resulting in modifications known as AMPylation and UMPylation. This is Protein nucleotidyltransferase YdiU from Shewanella putrefaciens (strain CN-32 / ATCC BAA-453).